We begin with the raw amino-acid sequence, 735 residues long: Photosystem I P700 chlorophyll a apoprotein A2 (735 aa).

Helical transmembrane passes span 47–70 (IFASHFGQLAIIFLWTSGNLFHVA), 136–159 (LYIGSIFLSFAATAFLFAGWLHLQ), 176–200 (LNHHLSGLFGVSSLAWTGHLIHVAI), 274–292 (MAHHHLAIAVLFIVAGHMY), 331–354 (LHFQLGLALASVGTICSLVAQHMY), 370–396 (ASLYTHHQYIAGFILCGAFAHGAIFFI), 418–440 (AIISHLSWVSLFLGFHTLGLYVH), and 518–536 (FLVHHAIALGLHTTTLILV). 2 residues coordinate [4Fe-4S] cluster: Cys-560 and Cys-569. The next 2 membrane-spanning stretches (helical) occupy residues 576–597 (AFYLAVFWMLNTIGWVTFYFHW) and 644–666 (LSVWSWMFLFGHLIYATGFMFLI). 3 residues coordinate chlorophyll a: His-655, Met-663, and Tyr-671. Trp-672 contributes to the phylloquinone binding site. The chain crosses the membrane as a helical span at residues 708-728 (VVGLAHFSAGYILTYAAFLIA).

Belongs to the PsaA/PsaB family. In terms of assembly, the PsaA/B heterodimer binds the P700 chlorophyll special pair and subsequent electron acceptors. PSI consists of a core antenna complex that captures photons, and an electron transfer chain that converts photonic excitation into a charge separation. The eukaryotic PSI reaction center is composed of at least 11 subunits. The cofactor is P700 is a chlorophyll a/chlorophyll a' dimer, A0 is one or more chlorophyll a, A1 is one or both phylloquinones and FX is a shared 4Fe-4S iron-sulfur center..

Its subcellular location is the plastid. It is found in the chloroplast thylakoid membrane. The enzyme catalyses reduced [plastocyanin] + hnu + oxidized [2Fe-2S]-[ferredoxin] = oxidized [plastocyanin] + reduced [2Fe-2S]-[ferredoxin]. PsaA and PsaB bind P700, the primary electron donor of photosystem I (PSI), as well as the electron acceptors A0, A1 and FX. PSI is a plastocyanin/cytochrome c6-ferredoxin oxidoreductase, converting photonic excitation into a charge separation, which transfers an electron from the donor P700 chlorophyll pair to the spectroscopically characterized acceptors A0, A1, FX, FA and FB in turn. Oxidized P700 is reduced on the lumenal side of the thylakoid membrane by plastocyanin or cytochrome c6. The protein is Photosystem I P700 chlorophyll a apoprotein A2 of Tupiella akineta (Green alga).